A 459-amino-acid polypeptide reads, in one-letter code: Taurine--pyruvate aminotransferase (459 aa).

Position 287 is an N6-(pyridoxal phosphate)lysine (Lys287).

Belongs to the class-III pyridoxal-phosphate-dependent aminotransferase family. Requires pyridoxal 5'-phosphate as cofactor.

It is found in the cytoplasm. The enzyme catalyses taurine + pyruvate = sulfoacetaldehyde + L-alanine. The protein operates within organosulfur degradation; taurine degradation via aerobic pathway; acetyl phosphate and sulfite from taurine: step 1/2. Catalyzes the degradation of taurine into alanine and sulfoacetaldehyde. In Rhodobacter capsulatus (strain ATCC BAA-309 / NBRC 16581 / SB1003), this protein is Taurine--pyruvate aminotransferase.